The primary structure comprises 562 residues: Dihydroxy-acid dehydratase (562 aa).

C55 contacts [2Fe-2S] cluster. D87 serves as a coordination point for Mg(2+). C128 is a binding site for [2Fe-2S] cluster. Residues D129 and K130 each contribute to the Mg(2+) site. K130 carries the N6-carboxylysine modification. C200 is a [2Fe-2S] cluster binding site. E451 is a binding site for Mg(2+). The active-site Proton acceptor is the S477.

It belongs to the IlvD/Edd family. In terms of assembly, homodimer. The cofactor is [2Fe-2S] cluster. Mg(2+) is required as a cofactor.

The catalysed reaction is (2R)-2,3-dihydroxy-3-methylbutanoate = 3-methyl-2-oxobutanoate + H2O. It catalyses the reaction (2R,3R)-2,3-dihydroxy-3-methylpentanoate = (S)-3-methyl-2-oxopentanoate + H2O. It functions in the pathway amino-acid biosynthesis; L-isoleucine biosynthesis; L-isoleucine from 2-oxobutanoate: step 3/4. The protein operates within amino-acid biosynthesis; L-valine biosynthesis; L-valine from pyruvate: step 3/4. In terms of biological role, functions in the biosynthesis of branched-chain amino acids. Catalyzes the dehydration of (2R,3R)-2,3-dihydroxy-3-methylpentanoate (2,3-dihydroxy-3-methylvalerate) into 2-oxo-3-methylpentanoate (2-oxo-3-methylvalerate) and of (2R)-2,3-dihydroxy-3-methylbutanoate (2,3-dihydroxyisovalerate) into 2-oxo-3-methylbutanoate (2-oxoisovalerate), the penultimate precursor to L-isoleucine and L-valine, respectively. This is Dihydroxy-acid dehydratase from Cytophaga hutchinsonii (strain ATCC 33406 / DSM 1761 / CIP 103989 / NBRC 15051 / NCIMB 9469 / D465).